Consider the following 166-residue polypeptide: NAD(P)H-quinone oxidoreductase subunit I, chloroplastic (166 aa).

4Fe-4S ferredoxin-type domains are found at residues Gly-55–Gln-84 and Val-95–Glu-124. [4Fe-4S] cluster contacts are provided by Cys-64, Cys-67, Cys-70, Cys-74, Cys-104, Cys-107, Cys-110, and Cys-114.

The protein belongs to the complex I 23 kDa subunit family. As to quaternary structure, NDH is composed of at least 16 different subunits, 5 of which are encoded in the nucleus. [4Fe-4S] cluster is required as a cofactor.

The protein localises to the plastid. It is found in the chloroplast thylakoid membrane. The enzyme catalyses a plastoquinone + NADH + (n+1) H(+)(in) = a plastoquinol + NAD(+) + n H(+)(out). It carries out the reaction a plastoquinone + NADPH + (n+1) H(+)(in) = a plastoquinol + NADP(+) + n H(+)(out). NDH shuttles electrons from NAD(P)H:plastoquinone, via FMN and iron-sulfur (Fe-S) centers, to quinones in the photosynthetic chain and possibly in a chloroplast respiratory chain. The immediate electron acceptor for the enzyme in this species is believed to be plastoquinone. Couples the redox reaction to proton translocation, and thus conserves the redox energy in a proton gradient. In Coreopsis petrophiloides (Tickseed), this protein is NAD(P)H-quinone oxidoreductase subunit I, chloroplastic.